A 291-amino-acid polypeptide reads, in one-letter code: 3-hydroxy-5-phosphonooxypentane-2,4-dione thiolase (291 aa).

The active-site Schiff-base intermediate with substrate is the Lys203.

This sequence belongs to the DeoC/FbaB aldolase family. In terms of assembly, homodecamer.

The protein localises to the cytoplasm. The enzyme catalyses dihydroxyacetone phosphate + acetyl-CoA = 3-hydroxy-2,4-dioxopentyl phosphate + CoA. In terms of biological role, involved in the degradation of phospho-AI-2, thereby terminating induction of the lsr operon and closing the AI-2 signaling cycle. Catalyzes the transfer of an acetyl moiety from 3-hydroxy-5-phosphonooxypentane-2,4-dione to CoA to form glycerone phosphate and acetyl-CoA. The chain is 3-hydroxy-5-phosphonooxypentane-2,4-dione thiolase from Photorhabdus laumondii subsp. laumondii (strain DSM 15139 / CIP 105565 / TT01) (Photorhabdus luminescens subsp. laumondii).